A 915-amino-acid chain; its full sequence is Isoleucine--tRNA ligase (915 aa).

The 'HIGH' region signature appears at 64-74 (PYANGNFHVGH). E557 is a binding site for L-isoleucyl-5'-AMP. The 'KMSKS' region signature appears at 598–602 (AMSKS). K601 contacts ATP. Residues C887, C890, C902, and C905 each coordinate Zn(2+).

It belongs to the class-I aminoacyl-tRNA synthetase family. IleS type 1 subfamily. Monomer. It depends on Zn(2+) as a cofactor.

The protein resides in the cytoplasm. It carries out the reaction tRNA(Ile) + L-isoleucine + ATP = L-isoleucyl-tRNA(Ile) + AMP + diphosphate. In terms of biological role, catalyzes the attachment of isoleucine to tRNA(Ile). As IleRS can inadvertently accommodate and process structurally similar amino acids such as valine, to avoid such errors it has two additional distinct tRNA(Ile)-dependent editing activities. One activity is designated as 'pretransfer' editing and involves the hydrolysis of activated Val-AMP. The other activity is designated 'posttransfer' editing and involves deacylation of mischarged Val-tRNA(Ile). The sequence is that of Isoleucine--tRNA ligase from Leptospira biflexa serovar Patoc (strain Patoc 1 / ATCC 23582 / Paris).